A 374-amino-acid polypeptide reads, in one-letter code: MREFIPPASRFIELPDGFAMRRGGALYGARIAYETFGSLNAARDNAVLVLTGLSPDAHAASRPDDPTPGWWEAMVGPGKPVDTDLWHVICVNSLGSCKGSTGPASTDPRTGEPYRLSFPELSIEDIADAAAHTVRALGISRLACVVGASMGGMSALALLARHPELARTHISLSGAVHALPFSIAVRSLQREAIRSDPGWLQGHYDEGEGPRRGMLTARKLGMMTYRSAQEWDCRFGRTRIGERRRADQGRFGPEFEVESYLDFHAQRFADRFDPNSYLYLSHAMDQFDLGDGGGGGGGAPGALSRMRVERALVMGARTDILFPLSQQQEIADGLSAGGADVSFLPVDTPAGHDAFLVDIERFGPPVAKFLAIVA.

The AB hydrolase-1 domain occupies 46–357; it reads AVLVLTGLSP…TPAGHDAFLV (312 aa). Catalysis depends on serine 149, which acts as the Nucleophile. Residues aspartate 319 and histidine 352 contribute to the active site.

The protein belongs to the AB hydrolase superfamily. MetX family. Homodimer.

It is found in the cytoplasm. It catalyses the reaction L-serine + acetyl-CoA = O-acetyl-L-serine + CoA. It carries out the reaction L-homoserine + acetyl-CoA = O-acetyl-L-homoserine + CoA. The protein operates within antibiotic biosynthesis. Its function is as follows. Involved in the biosynthesis of the antibiotic D-cycloserine (DCS), a cyclic structural analog of D-alanine, used as an antitubercular agent. Catalyzes the transfer of the acetyl group from acetyl-CoA to the hydroxyl group of L-serine to yield the activated serine, O-acetyl-L-serine. It prefers L-serine over L-homoserine. The sequence is that of L-serine/homoserine O-acetyltransferase from Streptomyces lavendulae.